We begin with the raw amino-acid sequence, 280 residues long: Bifunctional protein FolD (280 aa).

NADP(+) is bound by residues 158–160 (GES), I183, and I222.

Belongs to the tetrahydrofolate dehydrogenase/cyclohydrolase family. Homodimer.

It carries out the reaction (6R)-5,10-methylene-5,6,7,8-tetrahydrofolate + NADP(+) = (6R)-5,10-methenyltetrahydrofolate + NADPH. It catalyses the reaction (6R)-5,10-methenyltetrahydrofolate + H2O = (6R)-10-formyltetrahydrofolate + H(+). Its pathway is one-carbon metabolism; tetrahydrofolate interconversion. Functionally, catalyzes the oxidation of 5,10-methylenetetrahydrofolate to 5,10-methenyltetrahydrofolate and then the hydrolysis of 5,10-methenyltetrahydrofolate to 10-formyltetrahydrofolate. In Mycoplasma mobile (strain ATCC 43663 / 163K / NCTC 11711) (Mesomycoplasma mobile), this protein is Bifunctional protein FolD.